The chain runs to 607 residues: Large ribosomal subunit assembly factor BipA (607 aa).

Residues 3–198 (HSIRNIAIIA…SIIKYAPAPN (196 aa)) form the tr-type G domain. Residues 15 to 20 (DHGKTT) and 128 to 131 (NKID) each bind GTP.

It belongs to the TRAFAC class translation factor GTPase superfamily. Classic translation factor GTPase family. BipA subfamily. As to quaternary structure, monomer.

The protein resides in the cytoplasm. It catalyses the reaction GTP + H2O = GDP + phosphate + H(+). A 50S ribosomal subunit assembly protein with GTPase activity, required for 50S subunit assembly at low temperatures, may also play a role in translation. Binds GTP and analogs. Binds the 70S ribosome between the 30S and 50S subunits, in a similar position as ribosome-bound EF-G; it contacts a number of ribosomal proteins, both rRNAs and the A-site tRNA. The chain is Large ribosomal subunit assembly factor BipA from Buchnera aphidicola subsp. Acyrthosiphon pisum (strain APS) (Acyrthosiphon pisum symbiotic bacterium).